Here is a 303-residue protein sequence, read N- to C-terminus: UDP-3-O-acyl-N-acetylglucosamine deacetylase (303 aa).

Residues His78, His237, and Asp241 each contribute to the Zn(2+) site. The Proton donor role is filled by His264.

It belongs to the LpxC family. Requires Zn(2+) as cofactor.

The enzyme catalyses a UDP-3-O-[(3R)-3-hydroxyacyl]-N-acetyl-alpha-D-glucosamine + H2O = a UDP-3-O-[(3R)-3-hydroxyacyl]-alpha-D-glucosamine + acetate. The protein operates within glycolipid biosynthesis; lipid IV(A) biosynthesis; lipid IV(A) from (3R)-3-hydroxytetradecanoyl-[acyl-carrier-protein] and UDP-N-acetyl-alpha-D-glucosamine: step 2/6. Catalyzes the hydrolysis of UDP-3-O-myristoyl-N-acetylglucosamine to form UDP-3-O-myristoylglucosamine and acetate, the committed step in lipid A biosynthesis. This chain is UDP-3-O-acyl-N-acetylglucosamine deacetylase, found in Pseudomonas syringae pv. tomato (strain ATCC BAA-871 / DC3000).